We begin with the raw amino-acid sequence, 268 residues long: Thiazole synthase (268 aa).

Lys-96 serves as the catalytic Schiff-base intermediate with DXP. Residues Gly-157, 185–186 (AG), and 207–208 (NT) each bind 1-deoxy-D-xylulose 5-phosphate. The disordered stretch occupies residues 238–268 (PMRPREAASPSSPVEGVPFTPTGPRPGRGPQ). Positions 258–268 (PTGPRPGRGPQ) are enriched in pro residues.

This sequence belongs to the ThiG family. In terms of assembly, homotetramer. Forms heterodimers with either ThiH or ThiS.

Its subcellular location is the cytoplasm. It carries out the reaction [ThiS sulfur-carrier protein]-C-terminal-Gly-aminoethanethioate + 2-iminoacetate + 1-deoxy-D-xylulose 5-phosphate = [ThiS sulfur-carrier protein]-C-terminal Gly-Gly + 2-[(2R,5Z)-2-carboxy-4-methylthiazol-5(2H)-ylidene]ethyl phosphate + 2 H2O + H(+). It participates in cofactor biosynthesis; thiamine diphosphate biosynthesis. In terms of biological role, catalyzes the rearrangement of 1-deoxy-D-xylulose 5-phosphate (DXP) to produce the thiazole phosphate moiety of thiamine. Sulfur is provided by the thiocarboxylate moiety of the carrier protein ThiS. In vitro, sulfur can be provided by H(2)S. The sequence is that of Thiazole synthase from Thermus thermophilus (strain ATCC 27634 / DSM 579 / HB8).